The primary structure comprises 333 residues: NADH-ubiquinone oxidoreductase chain 2 (333 aa).

A run of 10 helical transmembrane segments spans residues 10 to 30 (WFIYFLITIFVLMMNSNNIFI), 57 to 77 (LIYYSVSVISSIFLFFMIIVY), 91 to 111 (FMVQMMFFLKIGTFPFHFWMI), 121 to 141 (QIFLMSTLIKFIPIYMMVSMT), 143 to 163 (INSWTLYFLITNSLYISFYAN), 170 to 190 (KLLACSTIFNSFYFIFILELN), 192 to 212 (NMFIAMIILYSFNYFLLISFL), 242 to 262 (MYPIFLSFVIKWNLIFMMVSV), 267 to 287 (WILFLLMISSMLMIWNYIIIL), and 313 to 333 (SYFALTLLSFNISFFITLNFL).

It belongs to the complex I subunit 2 family.

It is found in the mitochondrion inner membrane. It carries out the reaction a ubiquinone + NADH + 5 H(+)(in) = a ubiquinol + NAD(+) + 4 H(+)(out). Core subunit of the mitochondrial membrane respiratory chain NADH dehydrogenase (Complex I) that is believed to belong to the minimal assembly required for catalysis. Complex I functions in the transfer of electrons from NADH to the respiratory chain. The immediate electron acceptor for the enzyme is believed to be ubiquinone. This chain is NADH-ubiquinone oxidoreductase chain 2 (ND2), found in Apis mellifera ligustica (Common honeybee).